A 305-amino-acid chain; its full sequence is UDP-N-acetylenolpyruvoylglucosamine reductase 2 (305 aa).

One can recognise an FAD-binding PCMH-type domain in the interval V33–G197. Residue R176 is part of the active site. Residue S226 is the Proton donor of the active site. The active site involves E296.

It belongs to the MurB family. Requires FAD as cofactor.

The protein localises to the cytoplasm. The catalysed reaction is UDP-N-acetyl-alpha-D-muramate + NADP(+) = UDP-N-acetyl-3-O-(1-carboxyvinyl)-alpha-D-glucosamine + NADPH + H(+). The protein operates within cell wall biogenesis; peptidoglycan biosynthesis. Its function is as follows. Cell wall formation. The polypeptide is UDP-N-acetylenolpyruvoylglucosamine reductase 2 (murB2) (Bacillus anthracis).